The sequence spans 237 residues: Lipid A 1-diphosphate synthase (237 aa).

Residues 1–5 are Cytoplasmic-facing; sequence MIKNL. Residues 6 to 26 form a helical membrane-spanning segment; the sequence is PQIVLLNIVGLALFLSWYIPV. The Periplasmic segment spans residues 27 to 62; it reads NHGFWLPIDADIFYFFNQKLVESKAFLWLVALTNNR. A helical transmembrane segment spans residues 63–83; the sequence is AFDGCSLLAMGMLMLSFWLKE. Topologically, residues 84-90 are cytoplasmic; that stretch reads NAPGRRR. Residues 91-111 traverse the membrane as a helical segment; that stretch reads IVIIGLVMLLTAVVLNQLGQA. Over 112–145 the chain is Periplasmic; sequence LIPVKRASPTLTFTDINRVSELLSVPTKDASRDS. K167 is a topological domain (cytoplasmic). Residues 168–188 form a helical membrane-spanning segment; that stretch reads VAGLIALIIFVVFAFPRVMIG. Residues 189–194 are Periplasmic-facing; that stretch reads AHWFTD. The chain crosses the membrane as a helical span at residues 195–215; it reads IIVGSMTVILIGLPWVLLTPL. Topologically, residues 216-237 are cytoplasmic; sequence SDRLITFFDKSLPGKNKHFQNK.

The protein belongs to the LpxT phosphotransferase family.

The protein localises to the cell inner membrane. It carries out the reaction di-trans,octa-cis-undecaprenyl diphosphate + alpha-Kdo-(2-&gt;4)-alpha-Kdo-(2-&gt;6)-lipid A (E. coli) = (Kdo)2-lipid A 1-diphosphate + di-trans,octa-cis-undecaprenyl phosphate. Its pathway is bacterial outer membrane biogenesis; lipopolysaccharide biosynthesis. Inhibited by BasR. This regulation does not occur at the level of transcription, but rather following the assembly of LpxT into the inner membrane. In terms of biological role, involved in the modification of the lipid A domain of lipopolysaccharides (LPS). Transfers a phosphate group from undecaprenyl pyrophosphate (C55-PP) to lipid A to form lipid A 1-diphosphate. Contributes to the recycling of undecaprenyl phosphate (C55-P). In vitro, has low undecaprenyl-diphosphate phosphatase activity. This is Lipid A 1-diphosphate synthase from Escherichia coli (strain K12).